The primary structure comprises 146 residues: Snaclec rhodocytin subunit beta (146 aa).

An N-terminal signal peptide occupies residues 1-23 (MGRFIFVSFGLLVVFLSLSGTGA). 3 disulfide bridges follow: cysteine 25/cysteine 36, cysteine 53/cysteine 142, and cysteine 119/cysteine 134. Residues 32–143 (YEGHCYKPFN…CSSTCSFVCK (112 aa)) form the C-type lectin domain.

The protein belongs to the snaclec family. In terms of assembly, dimer (non-covalently linked) of heterodimers of subunits alpha and beta (disulfide-linked). In terms of tissue distribution, expressed by the venom gland.

It is found in the secreted. Elicits platelet aggregation by the binding to the C-type lectin domain family 1 member B (CLEC1B/CLEC2). Binding leads to tyrosine phosphorylation in the cytoplasmic tail of CLEC1B, which promotes the binding of spleen tyrosine kinase (Syk), subsequent activation of PLCgamma2, and platelet activation and aggregation. Binding to GPIbalpha (GP1BA) and alpha2/beta-1 (ITGA2/ITGB1) may also induce aggregation, but this is controversial. The protein is Snaclec rhodocytin subunit beta of Calloselasma rhodostoma (Malayan pit viper).